Consider the following 276-residue polypeptide: Glucosamine-6-phosphate deaminase 2 (276 aa).

Catalysis depends on D72, which acts as the Proton acceptor; for enolization step. Positions 106-130 form a coiled coil; that stretch reads ILDGNATDLQAECDAFEKKIKEAGG. D141 serves as the catalytic For ring-opening step. Residue H143 is the Proton acceptor; for ring-opening step of the active site. Catalysis depends on E148, which acts as the For ring-opening step. T161 bears the Phosphothreonine mark.

It belongs to the glucosamine/galactosamine-6-phosphate isomerase family. Homohexamer.

Its subcellular location is the cytoplasm. The enzyme catalyses alpha-D-glucosamine 6-phosphate + H2O = beta-D-fructose 6-phosphate + NH4(+). Its pathway is nucleotide-sugar biosynthesis; UDP-N-acetyl-alpha-D-glucosamine biosynthesis; alpha-D-glucosamine 6-phosphate from D-fructose 6-phosphate: step 1/1. Its activity is regulated as follows. Allosterically activated by N-acetylglucosamine-6-phosphate (GlcNAc6P). Its function is as follows. Catalyzes the reversible conversion of alpha-D-glucosamine 6-phosphate (GlcN-6P) into beta-D-fructose 6-phosphate (Fru-6P) and ammonium ion, a regulatory reaction step in de novo uridine diphosphate-N-acetyl-alpha-D-glucosamine (UDP-GlcNAc) biosynthesis via hexosamine pathway. Deamination is coupled to aldo-keto isomerization mediating the metabolic flux from UDP-GlcNAc toward Fru-6P. At high ammonium level can drive amination and isomerization of Fru-6P toward hexosamines and UDP-GlcNAc synthesis. Has a role in fine tuning the metabolic fluctuations of cytosolic UDP-GlcNAc and their effects on hyaluronan synthesis that occur during tissue remodeling. The chain is Glucosamine-6-phosphate deaminase 2 from Bos taurus (Bovine).